A 29-amino-acid polypeptide reads, in one-letter code: Cytochrome b6-f complex subunit 8 (29 aa).

A helical membrane pass occupies residues 3–23 (IVSIAWAALMVVFTFSLSLVV).

The protein belongs to the PetN family. As to quaternary structure, the 4 large subunits of the cytochrome b6-f complex are cytochrome b6, subunit IV (17 kDa polypeptide, PetD), cytochrome f and the Rieske protein, while the 4 small subunits are PetG, PetL, PetM and PetN. The complex functions as a dimer.

The protein resides in the plastid. The protein localises to the chloroplast thylakoid membrane. Component of the cytochrome b6-f complex, which mediates electron transfer between photosystem II (PSII) and photosystem I (PSI), cyclic electron flow around PSI, and state transitions. This is Cytochrome b6-f complex subunit 8 from Angiopteris evecta (Mule's foot fern).